A 494-amino-acid chain; its full sequence is Nuclear distribution protein PAC1 (494 aa).

One can recognise a LisH domain in the interval 14-46 (QKNELDKSVLRYLNWNYKQTVRHEHAQDYESVR). Residues 90–123 (NSIVRLQKKIIELEQNTETLVSQIKDLNTQVSEL) are a coiled coil. 7 WD repeats span residues 153–192 (NVES…IPLA), 196–244 (SHTK…CKFQ), 251–292 (GHEH…SLKT), 295–334 (PHSQ…SVGT), 347–395 (HFIE…LMAH), 415–454 (GHLS…HVWE), and 457–492 (HTGF…SNVF).

This sequence belongs to the WD repeat LIS1/nudF family. As to quaternary structure, self-associates. Interacts with NDL1 and dynein.

Its subcellular location is the cytoplasm. It localises to the cytoskeleton. It is found in the spindle pole. In terms of biological role, positively regulates the activity of the minus-end directed microtubule motor protein dynein. Plays a central role in positioning the mitotic spindle at the bud neck during cell division. Targets cytoplasmic dynein to microtubule plus ends, thereby promoting dynein-mediated microtubule sliding along the bud cortex and consequently the movement of the mitotic spindle to the bud neck. The protein is Nuclear distribution protein PAC1 of Saccharomyces cerevisiae (strain JAY291) (Baker's yeast).